The primary structure comprises 459 residues: Probable PTS system sucrose-specific EIIBC component (459 aa).

The region spanning 1–86 is the PTS EIIB type-1 domain; that stretch reads MHKEIAKELL…VHVWETAPSE (86 aa). C25 (phosphocysteine intermediate; for EIIB activity) is an active-site residue. The 354-residue stretch at 106–459 folds into the PTS EIIC type-1 domain; that stretch reads KTLSDIFVPI…LFLGFKEETE (354 aa). 11 helical membrane passes run 111–131, 147–167, 177–197, 209–229, 245–265, 288–308, 329–349, 360–380, 388–408, 412–432, and 434–454; these read IFVPIIPAITASGLLMGLIGM, MLDLVSSTAFILLPILVGFSA, LGAVIAGLLTHPDLLDPSMLG, LHIPMMGYQGSMIPILLSVFV, LDVVIIPFITVMVTGCLALIV, AGIAAGALFGGIYSTIVLSGL, FLVPIWSMANVAQGGAGLAVF, IALPASLTAFLGIVEPIVFGV, FIGAAIGGAIGGAYVVAVQVV, YGLTGIPMISIVLPFGAANFV, and YMIGFLIAAVSAFIATLFLGF.

It localises to the cell membrane. Its function is as follows. The phosphoenolpyruvate-dependent sugar phosphotransferase system (sugar PTS), a major carbohydrate active -transport system, catalyzes the phosphorylation of incoming sugar substrates concomitantly with their translocation across the cell membrane. This system may be involved in sucrose transport. The EIIB domain is mainly phosphorylated by the EIIA domains of GamP and PtsA/YpqE. Functionally, negatively regulates SacY activity by catalyzing its phosphorylation on 'His-99'. The protein is Probable PTS system sucrose-specific EIIBC component (sacX) of Bacillus subtilis (strain 168).